A 474-amino-acid chain; its full sequence is CUGBP Elav-like family member 4 (474 aa).

A sufficient for RNA-binding and MSE-dependent splicing activity region spans residues 1–287 (MYIKMATLAN…AAFAAAQMQQ (287 aa)). The segment covering 18-28 (LSTNGLGSSPG) has biased composition (polar residues). The disordered stretch occupies residues 18–41 (LSTNGLGSSPGSAGHMNGLSHSPG). 2 RRM domains span residues 54–135 (IKLF…PADS) and 141–221 (RKLF…FADT). The necessary for TNNT2 exon 5 inclusion stretch occupies residues 228–247 (RRMQQMAGQMGMFNPMAIPF). The RRM 3 domain maps to 392 to 467 (PQPPPMIPQQ…KRLKVQLKRP (76 aa)).

Belongs to the CELF/BRUNOL family.

The protein resides in the nucleus. It is found in the cytoplasm. Its function is as follows. RNA-binding protein implicated in the regulation of pre-mRNA alternative splicing. Mediates exon inclusion and/or exclusion in pre-mRNA that are subject to tissue-specific and developmentally regulated alternative splicing. Specifically activates exon 5 inclusion of cardiac isoforms of TNNT2 during heart remodeling at the juvenile to adult transition. Promotes exclusion of both the smooth muscle (SM) and non-muscle (NM) exons in actinin pre-mRNAs. Activates the splicing of MAPT/Tau exon 10. Binds to muscle-specific splicing enhancer (MSE) intronic sites flanking the alternative exon 5 of TNNT2 pre-mRNA. The chain is CUGBP Elav-like family member 4 (CELF4) from Macaca fascicularis (Crab-eating macaque).